A 90-amino-acid chain; its full sequence is WAP four-disulfide core domain protein 12 (90 aa).

Residues 1 to 23 (MGSSSFLVLMVSLALVTLVAVEG) form the signal peptide. The WAP domain occupies 27-74 (GIEKAGVCPADNVRCFKSDPPQCHTDQDCLGERKCCYLHCGFKCVIPV). 4 disulfide bridges follow: Cys34–Cys62, Cys41–Cys66, Cys49–Cys61, and Cys55–Cys70.

It localises to the secreted. Antibacterial protein. Putative acid-stable proteinase inhibitor. This chain is WAP four-disulfide core domain protein 12 (WFDC12), found in Gorilla gorilla gorilla (Western lowland gorilla).